We begin with the raw amino-acid sequence, 875 residues long: Serine/threonine-protein phosphatase 4 regulatory subunit 4 (875 aa).

2 HEAT repeats span residues 215 to 253 (ILPL…TKNV) and 254 to 292 (VLPE…RSQT). Residues 686-730 (MFQKKNYEKDLLDQEKEREELLFLEMEQLEKEKHQSDGRLASDKS) are a coiled coil. Positions 718 to 739 (KHQSDGRLASDKSFEKKRRDSR) are enriched in basic and acidic residues. The interval 718–773 (KHQSDGRLASDKSFEKKRRDSRTSTQSLSKNLPISVPGPSSSTASTSKEIKKSKLT) is disordered. A compositionally biased stretch (polar residues) spans 740–764 (TSTQSLSKNLPISVPGPSSSTASTS). Position 777 is a phosphoserine (serine 777). Threonine 799 carries the post-translational modification Phosphothreonine. Polar residues predominate over residues 825–859 (RNASSVPASFSPNPVMPSTSRGPGNTADPKSSGSK). A disordered region spans residues 825–875 (RNASSVPASFSPNPVMPSTSRGPGNTADPKSSGSKDAQPRKATLKSRKSNP). Over residues 866 to 875 (ATLKSRKSNP) the composition is skewed to basic residues.

In terms of assembly, serine/threonine-protein phosphatase 4 (PP4) occurs in different assemblies of the catalytic and one or more regulatory subunits. Component of the PP4 complex PPP4C-PPP4R4.

It localises to the cytoplasm. In terms of biological role, putative regulatory subunit of serine/threonine-protein phosphatase 4. This is Serine/threonine-protein phosphatase 4 regulatory subunit 4 (Ppp4r4) from Mus musculus (Mouse).